A 457-amino-acid polypeptide reads, in one-letter code: MADS-box transcription factor 1 (457 aa).

Residues P11 to E71 enclose the MADS-box domain. 2 disordered regions span residues S195 to H278 and S295 to E328. Over residues S199–E216 the composition is skewed to low complexity. The segment covering L218–N234 has biased composition (polar residues). A compositionally biased stretch (basic residues) spans K265–H278. Polar residues predominate over residues S295–T317. S372 is modified (phosphoserine).

Phosphorylated. Occurs periodically during mitosis.

It localises to the nucleus. Functionally, acts as a transcriptional activator with a role in the regulation of mitosis. Regulates septation and the periodic transcription of cdc15. In Schizosaccharomyces pombe (strain 972 / ATCC 24843) (Fission yeast), this protein is MADS-box transcription factor 1 (mbx1).